Consider the following 203-residue polypeptide: MSDFIVGLTGGIASGKSALAAEFEKLGIPVIDADVVARQVVEPGPILDAIAHRFGRAILLPDGMLDRQALRQIVFADPVQRKALEAITHPAIRAELRRAALAARGPYAIVAIPLLAEAGGRATYPWLDRILVVDIPAALQHARLMRRDGATPELANRMIAAQATRDQREAIADDIVSNDRTPEQLEQEARRLDVVYRVAASEH.

The DPCK domain maps to 5–203 (IVGLTGGIAS…VVYRVAASEH (199 aa)). 13-18 (ASGKSA) contacts ATP.

The protein belongs to the CoaE family.

It localises to the cytoplasm. The catalysed reaction is 3'-dephospho-CoA + ATP = ADP + CoA + H(+). Its pathway is cofactor biosynthesis; coenzyme A biosynthesis; CoA from (R)-pantothenate: step 5/5. Functionally, catalyzes the phosphorylation of the 3'-hydroxyl group of dephosphocoenzyme A to form coenzyme A. This is Dephospho-CoA kinase from Xanthomonas euvesicatoria pv. vesicatoria (strain 85-10) (Xanthomonas campestris pv. vesicatoria).